A 24-amino-acid polypeptide reads, in one-letter code: KQFTKCELSQVLKDMDGYGGIALP.

This sequence belongs to the glycosyl hydrolase 22 family. In terms of assembly, lactose synthase (LS) is a heterodimer of a catalytic component, beta1,4-galactosyltransferase (beta4Gal-T1) and a regulatory component, alpha-lactalbumin (LA). In terms of processing, glycosylated (50% of the proteins). In terms of tissue distribution, mammary gland specific. Secreted in milk.

It localises to the secreted. Functionally, regulatory subunit of lactose synthase, changes the substrate specificity of galactosyltransferase in the mammary gland making glucose a good acceptor substrate for this enzyme. This enables LS to synthesize lactose, the major carbohydrate component of milk. In other tissues, galactosyltransferase transfers galactose onto the N-acetylglucosamine of the oligosaccharide chains in glycoproteins. The polypeptide is Alpha-lactalbumin (LALBA) (Felis catus (Cat)).